The primary structure comprises 953 residues: Pyruvate, phosphate dikinase, chloroplastic (953 aa).

A chloroplast-targeting transit peptide spans M1–T77. The segment at P55–P74 is disordered. T533 carries the phosphothreonine; by PDRP1 modification. Catalysis depends on H535, which acts as the Tele-phosphohistidine intermediate. Substrate is bound by residues R641, R698, E827, G848, T849, N850, and D851. E827 is a Mg(2+) binding site. Mg(2+) is bound at residue D851. C913 acts as the Proton donor in catalysis.

The protein belongs to the PEP-utilizing enzyme family. As to quaternary structure, homotetramer. The cofactor is Mg(2+). Post-translationally, phosphorylation of Thr-533 in the dark inactivates the enzyme. Dephosphorylation upon light stimulation reactivates the enzyme. As to expression, isoform 1 mainly localized in mesophyll cells and only a low level is found in bundle sheath cells. Isoform 2 is expressed in roots and stems.

The protein resides in the plastid. The protein localises to the chloroplast. It localises to the cytoplasm. The catalysed reaction is pyruvate + phosphate + ATP = phosphoenolpyruvate + AMP + diphosphate + H(+). It functions in the pathway photosynthesis; C4 acid pathway. Its activity is regulated as follows. Activated by light-induced dephosphorylation. Inhibited by dark-induced phosphorylation. Both reactions are catalyzed by PDRP1. Functionally, formation of phosphoenolpyruvate, which is the primary acceptor of CO(2) in C4 and some Crassulacean acid metabolism plants. This Flaveria trinervia (Clustered yellowtops) protein is Pyruvate, phosphate dikinase, chloroplastic (PPDK).